The sequence spans 199 residues: Probable septum site-determining protein MinC (199 aa).

It belongs to the MinC family. In terms of assembly, interacts with MinD and FtsZ.

Functionally, cell division inhibitor that blocks the formation of polar Z ring septums. Rapidly oscillates between the poles of the cell to destabilize FtsZ filaments that have formed before they mature into polar Z rings. Prevents FtsZ polymerization. The sequence is that of Probable septum site-determining protein MinC from Persephonella marina (strain DSM 14350 / EX-H1).